We begin with the raw amino-acid sequence, 483 residues long: Glutamate--tRNA ligase (483 aa).

A 'HIGH' region motif is present at residues 11–21 (PSPTGLLHIGN). The 'KMSKS' region motif lies at 255–259 (KLSKR). Lys-258 provides a ligand contact to ATP.

This sequence belongs to the class-I aminoacyl-tRNA synthetase family. Glutamate--tRNA ligase type 1 subfamily. As to quaternary structure, monomer.

Its subcellular location is the cytoplasm. The enzyme catalyses tRNA(Glu) + L-glutamate + ATP = L-glutamyl-tRNA(Glu) + AMP + diphosphate. Functionally, catalyzes the attachment of glutamate to tRNA(Glu) in a two-step reaction: glutamate is first activated by ATP to form Glu-AMP and then transferred to the acceptor end of tRNA(Glu). In Lactococcus lactis subsp. lactis (strain IL1403) (Streptococcus lactis), this protein is Glutamate--tRNA ligase.